The primary structure comprises 66 residues: Beta-toxin Chui4 (66 aa).

One can recognise an LCN-type CS-alpha/beta domain in the interval 1 to 66 (KEGYLVELGT…VWPLKNKTCK (66 aa)). 4 disulfide bridges follow: Cys12–Cys65, Cys16–Cys41, Cys25–Cys46, and Cys29–Cys48.

The protein belongs to the long (4 C-C) scorpion toxin superfamily. Sodium channel inhibitor family. Beta subfamily. As to expression, expressed by the venom gland.

The protein resides in the secreted. Beta toxins bind voltage-independently at site-4 of sodium channels (Nav) and shift the voltage of activation toward more negative potentials thereby affecting sodium channel activation and promoting spontaneous and repetitive firing. Acts on human sodium channel Nav1.6/SCN8A. Also able to weakly shift the activation curves of human Nav1.2/SCN2A and Nav1.4/SCN4A. This Centruroides huichol (Scorpion) protein is Beta-toxin Chui4.